Consider the following 73-residue polypeptide: MYKAKDLRDQSLEELEATHDESRRKLFELNNEFRSQKKREKPHEMKHTRKDIARLLTVITEKRRENQNQTNQG.

Positions 1-20 are disordered; sequence MYKAKDLRDQSLEELEATHD.

It belongs to the universal ribosomal protein uL29 family.

This Protochlamydia amoebophila (strain UWE25) protein is Large ribosomal subunit protein uL29.